Reading from the N-terminus, the 512-residue chain is Sodium/proline symporter (512 aa).

Transmembrane regions (helical) follow at residues 16-36 (WQTYIMIAVYFLILIVIGFYG), 54-74 (IGPYITALSAGASDMSGWMIM), 85-105 (LSAMWITIGLTLGAYINYFVV), 139-159 (IISGLIIVVFFTLYTHSGFVS), 174-194 (FGLILVAFIVIFYTFFGGYLA), 200-220 (FFQGVIMLIAMVMVPIVAMMN), 240-260 (LFKGLSFIGIISLFSWGLGYF), 286-306 (ISWMAVGLLGAVAVGLTGIAF), 327-347 (VLFHPLVGGFLLAAILAAIMS), 381-401 (FVMIGRLSVLVVAIVAIAIAW), 410-430 (LVGNAWAGFGASFSPLVLFAL), 438-458 (AGAVSGMVSGALVVIVWIAWI), and 467-487 (IFGLYEIIPGFIVSVIVTYVV).

This sequence belongs to the sodium:solute symporter (SSF) (TC 2.A.21) family.

It localises to the cell membrane. The enzyme catalyses L-proline(in) + Na(+)(in) = L-proline(out) + Na(+)(out). In terms of biological role, catalyzes the sodium-dependent uptake of extracellular L-proline. Since most S.aureus strains are L-proline auxotrophs, this transporter may aid the bacterial persistence during an infection of tissues with low proline concentrations. This is Sodium/proline symporter (putP) from Staphylococcus aureus (strain Newman).